The sequence spans 1037 residues: Outer dynein arm-docking complex subunit 2 (1037 aa).

Basic and acidic residues-rich tracts occupy residues 316–334 and 376–391; these read EEQQKDNQIFEKPKTEDGH and SSIKDSQEEKQGKLEK. Disordered regions lie at residues 316–353 and 376–439; these read EEQQKDNQIFEKPKTEDGHSSVAGSEKSKIEKISFGKS and SSIK…ANAD. 10 ARM repeats span residues 477–516, 518–557, 528–570, 615–654, 656–695, 739–778, 821–860, 864–903, 905–944, and 946–985; these read ETCQLAIRDVGGLEVLINLLDTDEVKCKIGSLKILKEISH, PQIRRNIVDLGGLPIMVNILDSPHKSLKCLSAETIANVAK, GGLP…QHGG, HSNKEAIRKAGGIPLLARLLKTSHENMLIPVVGTLQECAS, ENYRAAIKAERIIENLVKNLNSENEQLQEHCAMAIYQCAE, KENVIKFREYKAIETLVGLLTDQPEEVLVNVVGALGECCQ, PESMAIIDRLDGVRLLWSLLKNPHPDVKASAAWALCPCIE, DAGEMVRSFVGGLELVVNLLKSDNKEVLASVCAAITNIAK, QENLAVITDHGVVPLLSKLANTNNDKLRRHLAEAISRCCM, and GRNRVAFGEHKAVAPLVRYLKSNDTNVHRATAQALYQLSE. The residue at position 545 (Lys-545) is an N6-methyllysine.

As to quaternary structure, component of the outer dynein arm-docking complex along with ODAD1, ODAD3, and ODAD4. Interacts with CFAP61. Highly expressed in testis. In males, also detected at lower levels in lung, brain, liver and muscle. In females, detected in ovary.

Its subcellular location is the cytoplasm. It is found in the cytoskeleton. The protein resides in the cilium axoneme. The protein localises to the cilium basal body. Functionally, component of the outer dynein arm-docking complex (ODA-DC) that mediates outer dynein arms (ODA) binding onto the doublet microtubule. Involved in mediating assembly of both ODAs and their axonemal docking complex onto ciliary microtubules. The polypeptide is Outer dynein arm-docking complex subunit 2 (Mus musculus (Mouse)).